The sequence spans 104 residues: Large ribosomal subunit protein bL21c (104 aa).

Belongs to the bacterial ribosomal protein bL21 family. Part of the 50S ribosomal subunit.

Its subcellular location is the plastid. The protein localises to the chloroplast. This protein binds to 23S rRNA. The chain is Large ribosomal subunit protein bL21c from Guillardia theta (Cryptophyte).